A 570-amino-acid polypeptide reads, in one-letter code: Sulfite reductase [NADPH] hemoprotein beta-component (570 aa).

4 residues coordinate [4Fe-4S] cluster: C434, C440, C479, and C483. C483 is a siroheme binding site.

Belongs to the nitrite and sulfite reductase 4Fe-4S domain family. In terms of assembly, alpha(8)-beta(8). The alpha component is a flavoprotein, the beta component is a hemoprotein. It depends on siroheme as a cofactor. [4Fe-4S] cluster serves as cofactor.

The enzyme catalyses hydrogen sulfide + 3 NADP(+) + 3 H2O = sulfite + 3 NADPH + 4 H(+). Its pathway is sulfur metabolism; hydrogen sulfide biosynthesis; hydrogen sulfide from sulfite (NADPH route): step 1/1. In terms of biological role, component of the sulfite reductase complex that catalyzes the 6-electron reduction of sulfite to sulfide. This is one of several activities required for the biosynthesis of L-cysteine from sulfate. This is Sulfite reductase [NADPH] hemoprotein beta-component from Escherichia coli O17:K52:H18 (strain UMN026 / ExPEC).